The following is a 372-amino-acid chain: Alanine dehydrogenase 2 (372 aa).

The active site involves histidine 95. Position 169–199 (169–199 (KVTIIGGGQAGTNAAKIALGLGADVTILDVN)) interacts with NAD(+).

The protein belongs to the AlaDH/PNT family.

It catalyses the reaction L-alanine + NAD(+) + H2O = pyruvate + NH4(+) + NADH + H(+). It participates in amino-acid degradation; L-alanine degradation via dehydrogenase pathway; NH(3) and pyruvate from L-alanine: step 1/1. Its function is as follows. May play a role in cell wall synthesis as L-alanine is an important constituent of the peptidoglycan layer. The sequence is that of Alanine dehydrogenase 2 (ald2) from Staphylococcus aureus (strain Mu50 / ATCC 700699).